The chain runs to 240 residues: Izumo sperm-egg fusion protein 3 (240 aa).

An N-terminal signal peptide occupies residues 1–22 (MGDLWLLLLLPLSLAAFHGVKG). Over 23–176 (CLECDPKFIE…DDPKKAESRE (154 aa)) the chain is Extracellular. Residues 177–197 (IGLFLILLAEGVILGGVLLLF) traverse the membrane as a helical segment. Over 198–240 (HFCISHQRKMKAIRRSLKTYLEKKLEELMGIKDEKEKDFRGRE) the chain is Cytoplasmic.

The protein belongs to the Izumo family. Monomer and homodimer.

The protein localises to the cell membrane. This chain is Izumo sperm-egg fusion protein 3 (IZUMO3), found in Bos taurus (Bovine).